A 148-amino-acid polypeptide reads, in one-letter code: Protein SprT-like (148 aa).

The SprT-like domain occupies 6–147 (LQQLVATISM…CGRCQGPIKL (142 aa)). H67 is a Zn(2+) binding site. E68 is a catalytic residue. H71 provides a ligand contact to Zn(2+).

It belongs to the SprT family. The cofactor is Zn(2+).

It is found in the cytoplasm. The chain is Protein SprT-like from Lactiplantibacillus plantarum (strain ATCC BAA-793 / NCIMB 8826 / WCFS1) (Lactobacillus plantarum).